A 435-amino-acid chain; its full sequence is 5-methylthioadenosine/S-adenosylhomocysteine deaminase (435 aa).

Zn(2+)-binding residues include histidine 65 and histidine 67. Substrate is bound by residues glutamate 94, arginine 150, and histidine 189. Histidine 216 is a Zn(2+) binding site. Residues glutamate 219 and aspartate 304 each contribute to the substrate site. Aspartate 304 is a Zn(2+) binding site.

This sequence belongs to the metallo-dependent hydrolases superfamily. MTA/SAH deaminase family. The cofactor is Zn(2+).

The enzyme catalyses S-adenosyl-L-homocysteine + H2O + H(+) = S-inosyl-L-homocysteine + NH4(+). It carries out the reaction S-methyl-5'-thioadenosine + H2O + H(+) = S-methyl-5'-thioinosine + NH4(+). Catalyzes the deamination of 5-methylthioadenosine and S-adenosyl-L-homocysteine into 5-methylthioinosine and S-inosyl-L-homocysteine, respectively. Is also able to deaminate adenosine. The protein is 5-methylthioadenosine/S-adenosylhomocysteine deaminase of Bacillus cereus (strain B4264).